Here is a 158-residue protein sequence, read N- to C-terminus: Ribosome-binding factor A (158 aa).

Residues 114–158 form a disordered region; sequence AKDAEVRQVSTGAQYAGDADPYRKPEDEDEETDGSSEKNEGPASA. The span at 148 to 158 shows a compositional bias: basic and acidic residues; that stretch reads SSEKNEGPASA.

It belongs to the RbfA family. Monomer. Binds 30S ribosomal subunits, but not 50S ribosomal subunits or 70S ribosomes.

It localises to the cytoplasm. One of several proteins that assist in the late maturation steps of the functional core of the 30S ribosomal subunit. Associates with free 30S ribosomal subunits (but not with 30S subunits that are part of 70S ribosomes or polysomes). Required for efficient processing of 16S rRNA. May interact with the 5'-terminal helix region of 16S rRNA. This Streptomyces griseus subsp. griseus (strain JCM 4626 / CBS 651.72 / NBRC 13350 / KCC S-0626 / ISP 5235) protein is Ribosome-binding factor A.